Reading from the N-terminus, the 624-residue chain is Ceramide transfer protein (624 aa).

Residues 1–11 show a composition bias toward polar residues; that stretch reads MSDNQSWNSSG. The segment at 1 to 24 is disordered; that stretch reads MSDNQSWNSSGSEEDPETESGPPV. Residues 23–117 enclose the PH domain; sequence PVERCGVLSK…WVDAIEQHKT (95 aa). 3 positions are modified to phosphoserine: Ser126, Ser132, and Ser135. Residues 202-221 are disordered; it reads DDEDDFPTTRSDGDFLHNTN. The stretch at 263–303 forms a coiled coil; it reads IELMVKREESWQKRHDREVEKRRRVEEAYKNVMEELKKKPR. Ser315 carries the phosphoserine modification. The FFAT signature appears at 321 to 327; that stretch reads EFFDAVE. Tyr372 is modified (phosphotyrosine). 3 positions are modified to phosphoserine: Ser373, Ser377, and Ser380. Residues 389 to 618 enclose the START domain; that stretch reads DVHRFSSQVE…FTSYVQEKTA (230 aa). Residues Glu472, Gln493, Asn530, and Tyr579 each contribute to the an N-acylsphing-4-enine site.

In terms of assembly, interacts with VAPA and VAPB. Interaction with VAPB is less efficient than with VAPA. Interacts (via FFAT motif) with MOSPD2 (via MSP domain). Post-translationally, phosphorylation on Ser-132 decreases the affinity toward phosphatidylinositol 4-phosphate at Golgi membranes and reduces ceramide transfer activity. Inactivated by hyperphosphorylation of serine residues by CSNK1G2/CK1 that triggers dissociation from the Golgi complex, thus down-regulating ER-to-Golgi transport of ceramide and sphingomyelin synthesis.

It localises to the cytoplasm. The protein localises to the golgi apparatus. It is found in the endoplasmic reticulum. The enzyme catalyses N-hexadecanoylsphing-4-enine(in) = N-hexadecanoylsphing-4-enine(out). Shelters ceramides and diacylglycerol lipids inside its START domain and mediates the intracellular trafficking of ceramides and diacylglycerol lipids in a non-vesicular manner. The sequence is that of Ceramide transfer protein (Cert1) from Mus musculus (Mouse).